The chain runs to 166 residues: Large ribosomal subunit protein eL14 (166 aa).

The segment at 135-166 (KADGTPRVLKKDRRERLRAEKAKGGKKAAAKK) is disordered. Positions 146-157 (DRRERLRAEKAK) are enriched in basic and acidic residues.

The protein belongs to the eukaryotic ribosomal protein eL14 family.

This is Large ribosomal subunit protein eL14 (RpL14) from Drosophila melanogaster (Fruit fly).